A 481-amino-acid chain; its full sequence is 3-isopropylmalate dehydratase large subunit (481 aa).

C355, C415, and C418 together coordinate [4Fe-4S] cluster.

It belongs to the aconitase/IPM isomerase family. LeuC type 1 subfamily. As to quaternary structure, heterodimer of LeuC and LeuD. Requires [4Fe-4S] cluster as cofactor.

It carries out the reaction (2R,3S)-3-isopropylmalate = (2S)-2-isopropylmalate. It participates in amino-acid biosynthesis; L-leucine biosynthesis; L-leucine from 3-methyl-2-oxobutanoate: step 2/4. Catalyzes the isomerization between 2-isopropylmalate and 3-isopropylmalate, via the formation of 2-isopropylmaleate. The chain is 3-isopropylmalate dehydratase large subunit from Symbiobacterium thermophilum (strain DSM 24528 / JCM 14929 / IAM 14863 / T).